The following is a 225-amino-acid chain: Octanoyltransferase (225 aa).

In terms of domain architecture, BPL/LPL catalytic spans 44–219 (RETPDEIWLL…NFIAQLTHRI (176 aa)). Substrate is bound by residues 83–90 (RGGQITYH), 150–152 (SLG), and 163–165 (GIA). Catalysis depends on C181, which acts as the Acyl-thioester intermediate.

This sequence belongs to the LipB family.

It is found in the cytoplasm. It catalyses the reaction octanoyl-[ACP] + L-lysyl-[protein] = N(6)-octanoyl-L-lysyl-[protein] + holo-[ACP] + H(+). Its pathway is protein modification; protein lipoylation via endogenous pathway; protein N(6)-(lipoyl)lysine from octanoyl-[acyl-carrier-protein]: step 1/2. Functionally, catalyzes the transfer of endogenously produced octanoic acid from octanoyl-acyl-carrier-protein onto the lipoyl domains of lipoate-dependent enzymes. Lipoyl-ACP can also act as a substrate although octanoyl-ACP is likely to be the physiological substrate. This is Octanoyltransferase from Nitrosomonas eutropha (strain DSM 101675 / C91 / Nm57).